A 343-amino-acid polypeptide reads, in one-letter code: 3-hydroxy-3-methylglutaryl-CoA lyase, cytoplasmic (343 aa).

Residue G2 is the site of N-myristoyl glycine attachment. The Pyruvate carboxyltransferase domain maps to 48–315 (VKIVEVGPRD…NTGVDLYKVM (268 aa)). Position 56 (R56) interacts with substrate. The a divalent metal cation site is built by D57, H248, and H250. C281 is an active-site residue. Residue N290 participates in a divalent metal cation binding.

It belongs to the HMG-CoA lyase family. A divalent metal cation serves as cofactor.

Its subcellular location is the cytoplasm. It localises to the cytosol. It is found in the endoplasmic reticulum membrane. The catalysed reaction is (3S)-3-hydroxy-3-methylglutaryl-CoA = acetoacetate + acetyl-CoA. Its pathway is metabolic intermediate metabolism; (S)-3-hydroxy-3-methylglutaryl-CoA degradation; acetoacetate from (S)-3-hydroxy-3-methylglutaryl-CoA: step 1/1. Non-mitochondrial 3-hydroxy-3-methylglutaryl-CoA lyase that catalyzes a cation-dependent cleavage of (S)-3-hydroxy-3-methylglutaryl-CoA into acetyl-CoA and acetoacetate, a key step in ketogenesis, the products of which support energy production in nonhepatic animal tissues. The protein is 3-hydroxy-3-methylglutaryl-CoA lyase, cytoplasmic (Hmgcll1) of Mus musculus (Mouse).